The chain runs to 652 residues: Threonine--tRNA ligase (652 aa).

Residues 1–61 (MIKLKLPDGS…DRDAEVEIVT (61 aa)) form the TGS domain. A catalytic region spans residues 243–548 (DHRKIGREMD…LIENYEGRFP (306 aa)). Zn(2+)-binding residues include Cys-348, His-399, and His-525.

This sequence belongs to the class-II aminoacyl-tRNA synthetase family. In terms of assembly, homodimer. Requires Zn(2+) as cofactor.

Its subcellular location is the cytoplasm. The catalysed reaction is tRNA(Thr) + L-threonine + ATP = L-threonyl-tRNA(Thr) + AMP + diphosphate + H(+). Catalyzes the attachment of threonine to tRNA(Thr) in a two-step reaction: L-threonine is first activated by ATP to form Thr-AMP and then transferred to the acceptor end of tRNA(Thr). Also edits incorrectly charged L-seryl-tRNA(Thr). The protein is Threonine--tRNA ligase of Parvibaculum lavamentivorans (strain DS-1 / DSM 13023 / NCIMB 13966).